The primary structure comprises 459 residues: Glutamate--tRNA ligase 2 (459 aa).

Residues 8 to 18 (PSPTGYLHIGG) carry the 'HIGH' region motif. The 'KMSKS' region signature appears at 237-241 (KLSKR). K240 is a binding site for ATP.

Belongs to the class-I aminoacyl-tRNA synthetase family. Glutamate--tRNA ligase type 1 subfamily. As to quaternary structure, monomer.

The protein localises to the cytoplasm. It carries out the reaction tRNA(Glu) + L-glutamate + ATP = L-glutamyl-tRNA(Glu) + AMP + diphosphate. In terms of biological role, catalyzes the attachment of glutamate to tRNA(Glu) in a two-step reaction: glutamate is first activated by ATP to form Glu-AMP and then transferred to the acceptor end of tRNA(Glu). This is Glutamate--tRNA ligase 2 from Campylobacter curvus (strain 525.92).